The following is a 115-amino-acid chain: UPF0295 protein BPUM_0828 (115 aa).

The next 2 helical transmembrane spans lie at 13–33 and 41–61; these read TFAL…VFFK and FFML…FWIG.

This sequence belongs to the UPF0295 family.

It is found in the cell membrane. The polypeptide is UPF0295 protein BPUM_0828 (Bacillus pumilus (strain SAFR-032)).